The primary structure comprises 601 residues: Casbene synthase, chloroplastic (601 aa).

The N-terminal 56 residues, 1–56 (MALPSAAMQSNPEKLNLFHRLSSLPTTSLEYGNNRFPFFSSSAKSHFKKPTQACLS), are a transit peptide targeting the chloroplast. D355, D359, N499, S503, and E507 together coordinate Mg(2+). A DDXXD motif motif is present at residues 355 to 359 (DDTID).

Belongs to the terpene synthase family. Mg(2+) serves as cofactor.

It localises to the plastid. The protein resides in the chloroplast. The catalysed reaction is (2E,6E,10E)-geranylgeranyl diphosphate = casbene + diphosphate. Functionally, catalyzes the cyclization of geranylgeranyl diphosphate to casbene, a diterpene phytoalexin with antibacterial and antifungal activity. This chain is Casbene synthase, chloroplastic, found in Ricinus communis (Castor bean).